The following is a 290-amino-acid chain: Diaminopimelate epimerase (290 aa).

The substrate site is built by asparagine 17, glutamine 49, and asparagine 69. The active-site Proton donor is cysteine 78. Residues glycine 79–asparagine 80, asparagine 166, asparagine 199, and glutamate 217–arginine 218 contribute to the substrate site. Catalysis depends on cysteine 226, which acts as the Proton acceptor. Glycine 227–serine 228 is a binding site for substrate.

Belongs to the diaminopimelate epimerase family. As to quaternary structure, homodimer.

Its subcellular location is the cytoplasm. The enzyme catalyses (2S,6S)-2,6-diaminopimelate = meso-2,6-diaminopimelate. It functions in the pathway amino-acid biosynthesis; L-lysine biosynthesis via DAP pathway; DL-2,6-diaminopimelate from LL-2,6-diaminopimelate: step 1/1. Functionally, catalyzes the stereoinversion of LL-2,6-diaminopimelate (L,L-DAP) to meso-diaminopimelate (meso-DAP), a precursor of L-lysine and an essential component of the bacterial peptidoglycan. This Nitrobacter hamburgensis (strain DSM 10229 / NCIMB 13809 / X14) protein is Diaminopimelate epimerase.